Here is a 393-residue protein sequence, read N- to C-terminus: MSKDTTTYQGVTEIGSVPAYLVLADGRTFTGFGFGAIGTTLGEAVFTTAMTGYQETMTDPSYHRQIVVATAPQIGNTGWNDEDNESRDGKIWVAGLVIRDLAARVSNWRATTSLQQEMAGQGIVGIGGIDTRALVRHLRNEGSIAAGIFSGADAQRPVEELVEIVKNQPAMTGANLSVEVSADETYVIEAEGEERHTVVAYDLGIKQNTPRRFSARGVRTVIVPAETPFEDIKQYNPSGVFISNGPGDPAAADVMVDIVREVLEADIPFFGICFGNQILGRAFGMETYKLKFGHRGINVPVKNHITGKIDITAQNHGFALKGEAGQEFETDFGTAIVTHTCLNDGVVEGIALKSGRAYSVQYHPEAAAGPNDASPLFDQFVELMDADAQKKGA.

Residues 1-194 (MSKDTTTYQG…TYVIEAEGEE (194 aa)) form a CPSase region. The L-glutamine site is built by Ser61, Gly245, and Gly247. In terms of domain architecture, Glutamine amidotransferase type-1 spans 195–390 (RHTVVAYDLG…VELMDADAQK (196 aa)). Residue Cys273 is the Nucleophile of the active site. L-glutamine-binding residues include Phe274, Gln277, Asn315, Gly317, and Phe318. Catalysis depends on residues His363 and Glu365.

Belongs to the CarA family. As to quaternary structure, composed of two chains; the small (or glutamine) chain promotes the hydrolysis of glutamine to ammonia, which is used by the large (or ammonia) chain to synthesize carbamoyl phosphate. Tetramer of heterodimers (alpha,beta)4.

The catalysed reaction is hydrogencarbonate + L-glutamine + 2 ATP + H2O = carbamoyl phosphate + L-glutamate + 2 ADP + phosphate + 2 H(+). It carries out the reaction L-glutamine + H2O = L-glutamate + NH4(+). It participates in amino-acid biosynthesis; L-arginine biosynthesis; carbamoyl phosphate from bicarbonate: step 1/1. Its pathway is pyrimidine metabolism; UMP biosynthesis via de novo pathway; (S)-dihydroorotate from bicarbonate: step 1/3. Small subunit of the glutamine-dependent carbamoyl phosphate synthetase (CPSase). CPSase catalyzes the formation of carbamoyl phosphate from the ammonia moiety of glutamine, carbonate, and phosphate donated by ATP, constituting the first step of 2 biosynthetic pathways, one leading to arginine and/or urea and the other to pyrimidine nucleotides. The small subunit (glutamine amidotransferase) binds and cleaves glutamine to supply the large subunit with the substrate ammonia. The polypeptide is Carbamoyl phosphate synthase small chain (Corynebacterium glutamicum (strain ATCC 13032 / DSM 20300 / JCM 1318 / BCRC 11384 / CCUG 27702 / LMG 3730 / NBRC 12168 / NCIMB 10025 / NRRL B-2784 / 534)).